The chain runs to 263 residues: UPF0739 protein C1orf74 homolog (263 aa).

Belongs to the UPF0739 family.

In Xenopus tropicalis (Western clawed frog), this protein is UPF0739 protein C1orf74 homolog.